The following is a 337-amino-acid chain: Glyceraldehyde-3-phosphate dehydrogenase 1 (337 aa).

Residues Arg11–Ile12, Asp33, and Arg78 each bind NAD(+). D-glyceraldehyde 3-phosphate is bound by residues Ser149–Thr151, Thr180, Thr209–Gly210, and Arg232. The active-site Nucleophile is Cys150. Position 318 (Asn318) interacts with NAD(+).

It belongs to the glyceraldehyde-3-phosphate dehydrogenase family. In terms of assembly, homotetramer.

Its subcellular location is the cytoplasm. It catalyses the reaction D-glyceraldehyde 3-phosphate + phosphate + NAD(+) = (2R)-3-phospho-glyceroyl phosphate + NADH + H(+). It participates in carbohydrate degradation; glycolysis; pyruvate from D-glyceraldehyde 3-phosphate: step 1/5. The sequence is that of Glyceraldehyde-3-phosphate dehydrogenase 1 (gpd1) from Agaricus bisporus (White button mushroom).